The following is a 271-amino-acid chain: 5-deoxy-glucuronate isomerase (271 aa).

It belongs to the isomerase IolB family.

It carries out the reaction 5-deoxy-D-glucuronate = 5-dehydro-2-deoxy-D-gluconate. It participates in polyol metabolism; myo-inositol degradation into acetyl-CoA; acetyl-CoA from myo-inositol: step 4/7. Functionally, involved in the isomerization of 5-deoxy-glucuronate (5DG) to 5-dehydro-2-deoxy-D-gluconate (DKG or 2-deoxy-5-keto-D-gluconate). The protein is 5-deoxy-glucuronate isomerase of Bacillus subtilis subsp. natto.